Here is a 155-residue protein sequence, read N- to C-terminus: Cytochrome c oxidase subunit 4, mitochondrial (155 aa).

The transit peptide at M1–L25 directs the protein to the mitochondrion. T55 carries the phosphothreonine modification. Residues C111, H119, C134, and C137 each contribute to the Zn(2+) site.

This sequence belongs to the cytochrome c oxidase subunit 5B family. Component of the cytochrome c oxidase (complex IV, CIV), a multisubunit enzyme composed of 12 subunits. The complex is composed of a catalytic core of 3 subunits COX1, COX2 and COX3, encoded in the mitochondrial DNA, and 9 supernumerary subunits COX4, COX5A (or COX5B), COX6, COX7, COX8, COX9, COX12, COX13 and COX26, which are encoded in the nuclear genome. The complex exists as a monomer or a dimer and forms supercomplexes (SCs) in the inner mitochondrial membrane with a dimer of ubiquinol-cytochrome c oxidoreductase (cytochrome b-c1 complex, complex III, CIII), resulting in 2 different assemblies (supercomplexes III(2)IV and III(2)IV(2)).

It is found in the mitochondrion inner membrane. Its pathway is energy metabolism; oxidative phosphorylation. Functionally, component of the cytochrome c oxidase, the last enzyme in the mitochondrial electron transport chain which drives oxidative phosphorylation. The respiratory chain contains 3 multisubunit complexes succinate dehydrogenase (complex II, CII), ubiquinol-cytochrome c oxidoreductase (cytochrome b-c1 complex, complex III, CIII) and cytochrome c oxidase (complex IV, CIV), that cooperate to transfer electrons derived from NADH and succinate to molecular oxygen, creating an electrochemical gradient over the inner membrane that drives transmembrane transport and the ATP synthase. Cytochrome c oxidase is the component of the respiratory chain that catalyzes the reduction of oxygen to water. Electrons originating from reduced cytochrome c in the intermembrane space (IMS) are transferred via the dinuclear copper A center (CU(A)) of COX2 and heme A of COX1 to the active site in COX1, a binuclear center (BNC) formed by heme A3 and copper B (CU(B)). The BNC reduces molecular oxygen to 2 water molecules using 4 electrons from cytochrome c in the IMS and 4 protons from the mitochondrial matrix. The protein is Cytochrome c oxidase subunit 4, mitochondrial (COX4) of Saccharomyces cerevisiae (strain ATCC 204508 / S288c) (Baker's yeast).